The primary structure comprises 412 residues: Serine hydroxymethyltransferase (412 aa).

(6S)-5,6,7,8-tetrahydrofolate is bound by residues L117 and 121–123 (GHL). K226 is modified (N6-(pyridoxal phosphate)lysine). Position 349–351 (349–351 (SPF)) interacts with (6S)-5,6,7,8-tetrahydrofolate.

It belongs to the SHMT family. As to quaternary structure, homodimer. The cofactor is pyridoxal 5'-phosphate.

It localises to the cytoplasm. It catalyses the reaction (6R)-5,10-methylene-5,6,7,8-tetrahydrofolate + glycine + H2O = (6S)-5,6,7,8-tetrahydrofolate + L-serine. It participates in one-carbon metabolism; tetrahydrofolate interconversion. The protein operates within amino-acid biosynthesis; glycine biosynthesis; glycine from L-serine: step 1/1. In terms of biological role, catalyzes the reversible interconversion of serine and glycine with tetrahydrofolate (THF) serving as the one-carbon carrier. This reaction serves as the major source of one-carbon groups required for the biosynthesis of purines, thymidylate, methionine, and other important biomolecules. Also exhibits THF-independent aldolase activity toward beta-hydroxyamino acids, producing glycine and aldehydes, via a retro-aldol mechanism. The protein is Serine hydroxymethyltransferase of Geobacillus thermodenitrificans (strain NG80-2).